We begin with the raw amino-acid sequence, 484 residues long: MTLRFYDTASAEVRDFVPLEDGKASVYYCGATVQGMPHVGHVRSAIAFDQLTRWLEFRGLRVTVVRNVTDIDDKILAKSAQSFGPDWDAEPSARQTEEWWALAYRYEQEFENAYESLGVQRPTYEPRATGHIPEMHTLIQRLIDRGHAYPALDDSGDVYFDVRSWSKYGSLTRQNIDDMQGAPDADPRGKRDPRDFALWKGFKDGEPVTAKWESPWGAGRPGWHLECSAMVTKYLGPRFDIHGGGLDLRFPHHENEMAQSQAAGDEFANFWMHNGMVTYEGEKMSKSIGNTVSPAEMLELASPRVVRYYLGQAHYRSILDYRPTSLQEAAAAVERIDGFIHKASSKVGTGAPDVSPQANMPAAFIAAMDDDLNVPQALGVLHETVRAGNTALASGDLEGAKAALYSVLSMTEVLGLDSVKRPEAVQGREHAALEVLIEAQLEARAAARANKDWAASDAIRDTLAAAGVVVEDGADGATWSLKRD.

Cysteine 29 contacts Zn(2+). Positions 31–41 (ATVQGMPHVGH) match the 'HIGH' region motif. Residues cysteine 227, histidine 252, and glutamate 256 each contribute to the Zn(2+) site. Residues 283 to 287 (KMSKS) carry the 'KMSKS' region motif. Lysine 286 serves as a coordination point for ATP.

It belongs to the class-I aminoacyl-tRNA synthetase family. In terms of assembly, monomer. Zn(2+) serves as cofactor.

It is found in the cytoplasm. It carries out the reaction tRNA(Cys) + L-cysteine + ATP = L-cysteinyl-tRNA(Cys) + AMP + diphosphate. The sequence is that of Cysteine--tRNA ligase from Paenarthrobacter aurescens (strain TC1).